Consider the following 235-residue polypeptide: CD-NTase-associated protein 13 (235 aa).

2 consecutive transmembrane segments (helical) span residues 14 to 34 (IVHH…LIWI) and 45 to 65 (IIFT…IVGL).

This sequence in the C-terminal section; belongs to the bacterial STING family. Homodimer.

It is found in the cell inner membrane. Functionally, effector protein of a CBASS antivirus system. CBASS (cyclic oligonucleotide-based antiphage signaling system) provides immunity against bacteriophage. The CD-NTase protein synthesizes cyclic nucleotides in response to infection; these serve as specific second messenger signals. The signals activate a diverse range of effectors, leading to bacterial cell death and thus abortive phage infection. A type I-D(GG) CBASS system. Its function is as follows. Binds cyclic dinucleotides: binds c-di-GMP (synthesized by the cognate CdnE encoded upstream in the same operon), cyclic 3'3'-cyclic GMP-AMP (3'3'-cGAMP) but not cUMP-AMP. The effector protein for this CBASS system, its activity is stimulated by c-di-GMP and leads to cell death. The polypeptide is CD-NTase-associated protein 13 (Flavobacteriaceae sp. genome_bin_11).